The sequence spans 104 residues: L-rhamnose mutarotase (104 aa).

Position 18 (tyrosine 18) interacts with substrate. The active-site Proton donor is the histidine 22. Substrate-binding positions include tyrosine 41 and 76 to 77 (WW).

This sequence belongs to the rhamnose mutarotase family. In terms of assembly, homodimer.

The protein localises to the cytoplasm. It catalyses the reaction alpha-L-rhamnose = beta-L-rhamnose. It functions in the pathway carbohydrate metabolism; L-rhamnose metabolism. Its function is as follows. Involved in the anomeric conversion of L-rhamnose. In Lactiplantibacillus plantarum (strain ATCC BAA-793 / NCIMB 8826 / WCFS1) (Lactobacillus plantarum), this protein is L-rhamnose mutarotase.